Consider the following 707-residue polypeptide: Acetyl-coenzyme A synthetase 1 (707 aa).

CoA contacts are provided by residues 242 to 245 and Thr361; that span reads RGGK. ATP-binding positions include 437–439, 461–466, Asp553, and Arg568; these read GEP and DTYWQT. Residue Ser576 participates in CoA binding. ATP is bound at residue Arg579. Arg644 provides a ligand contact to CoA. A Microbody targeting signal motif is present at residues 705–707; that stretch reads VKL.

This sequence belongs to the ATP-dependent AMP-binding enzyme family.

Its subcellular location is the microsome. It is found in the endoplasmic reticulum. The catalysed reaction is acetate + ATP + CoA = acetyl-CoA + AMP + diphosphate. May be required for assimilation of ethanol and acetate. The protein is Acetyl-coenzyme A synthetase 1 (ACS1) of Kluyveromyces lactis (strain ATCC 8585 / CBS 2359 / DSM 70799 / NBRC 1267 / NRRL Y-1140 / WM37) (Yeast).